An 84-amino-acid polypeptide reads, in one-letter code: Large ribosomal subunit protein uL23 (84 aa).

It belongs to the universal ribosomal protein uL23 family. As to quaternary structure, part of the 50S ribosomal subunit. Contacts protein L29.

Binds to 23S rRNA. One of the proteins that surrounds the polypeptide exit tunnel on the outside of the ribosome. This Halobacterium salinarum (strain ATCC 700922 / JCM 11081 / NRC-1) (Halobacterium halobium) protein is Large ribosomal subunit protein uL23.